A 306-amino-acid polypeptide reads, in one-letter code: Homoserine kinase (306 aa).

95 to 105 is a binding site for ATP; it reads PQSRGLGSSAA.

This sequence belongs to the GHMP kinase family. Homoserine kinase subfamily.

The protein localises to the cytoplasm. The enzyme catalyses L-homoserine + ATP = O-phospho-L-homoserine + ADP + H(+). It functions in the pathway amino-acid biosynthesis; L-threonine biosynthesis; L-threonine from L-aspartate: step 4/5. Its function is as follows. Catalyzes the ATP-dependent phosphorylation of L-homoserine to L-homoserine phosphate. This is Homoserine kinase from Corynebacterium urealyticum (strain ATCC 43042 / DSM 7109).